A 160-amino-acid chain; its full sequence is SsrA-binding protein (160 aa).

The protein belongs to the SmpB family.

The protein resides in the cytoplasm. In terms of biological role, required for rescue of stalled ribosomes mediated by trans-translation. Binds to transfer-messenger RNA (tmRNA), required for stable association of tmRNA with ribosomes. tmRNA and SmpB together mimic tRNA shape, replacing the anticodon stem-loop with SmpB. tmRNA is encoded by the ssrA gene; the 2 termini fold to resemble tRNA(Ala) and it encodes a 'tag peptide', a short internal open reading frame. During trans-translation Ala-aminoacylated tmRNA acts like a tRNA, entering the A-site of stalled ribosomes, displacing the stalled mRNA. The ribosome then switches to translate the ORF on the tmRNA; the nascent peptide is terminated with the 'tag peptide' encoded by the tmRNA and targeted for degradation. The ribosome is freed to recommence translation, which seems to be the essential function of trans-translation. This is SsrA-binding protein from Zymomonas mobilis subsp. mobilis (strain ATCC 31821 / ZM4 / CP4).